Reading from the N-terminus, the 295-residue chain is 3-hydroxy-5-phosphonooxypentane-2,4-dione thiolase (295 aa).

Catalysis depends on lysine 203, which acts as the Schiff-base intermediate with substrate.

It belongs to the DeoC/FbaB aldolase family. Homodecamer.

Its subcellular location is the cytoplasm. It carries out the reaction dihydroxyacetone phosphate + acetyl-CoA = 3-hydroxy-2,4-dioxopentyl phosphate + CoA. In terms of biological role, involved in the degradation of phospho-AI-2, thereby terminating induction of the lsr operon and closing the AI-2 signaling cycle. Catalyzes the transfer of an acetyl moiety from 3-hydroxy-5-phosphonooxypentane-2,4-dione to CoA to form glycerone phosphate and acetyl-CoA. The sequence is that of 3-hydroxy-5-phosphonooxypentane-2,4-dione thiolase from Klebsiella pneumoniae subsp. pneumoniae (strain ATCC 700721 / MGH 78578).